Reading from the N-terminus, the 429-residue chain is C4-dicarboxylate transport protein (429 aa).

8 helical membrane-spanning segments follow: residues 9–29 (VLYVQVIFAIIVGVILGHFYP), 45–65 (LIKMVIGPIIFCTVVTGIAGM), 79–99 (LLYFEVVSTFALLLGLAATHI), 149–169 (GEILQILLIALLFGSVLAHLG), 185–205 (VLFGIVHIVTKLAPIGAFGAM), 223–243 (LIGTFYLTSIVFVLVVLGTIA), 308–328 (IYMTMAVLFIAQATNIELTWM), and 356–376 (AATLAVVPTIPLSGMVLILGI).

It belongs to the dicarboxylate/amino acid:cation symporter (DAACS) (TC 2.A.23) family.

Its subcellular location is the cell inner membrane. Responsible for the transport of dicarboxylates such as succinate, fumarate, and malate from the periplasm across the membrane. The sequence is that of C4-dicarboxylate transport protein from Burkholderia ambifaria (strain MC40-6).